Here is a 401-residue protein sequence, read N- to C-terminus: Adenosine 3'-phospho 5'-phosphosulfate transporter 2 (401 aa).

2 N-linked (GlcNAc...) asparagine glycosylation sites follow: asparagine 12 and asparagine 71. The next 6 helical transmembrane spans lie at 78–98, 111–131, 147–167, 170–190, 200–220, and 223–243; these read LTQF…YGYL, YGWY…LIEL, MIIA…LGYL, PTQV…GVFI, VSAA…DSTI, and NFNL…AVIG. N-linked (GlcNAc...) asparagine glycosylation occurs at asparagine 254. 4 helical membrane-spanning segments follow: residues 267-287, 298-317, 324-346, and 349-369; these read IGFV…PAVT, GYAF…VLAL, LIAV…IFFA, and FTFQ…LNVY.

It belongs to the nucleotide-sugar transporter family. SLC35B subfamily.

Its subcellular location is the golgi apparatus membrane. The catalysed reaction is 3'-phosphoadenylyl sulfate(in) + adenosine 3',5'-bisphosphate(out) = 3'-phosphoadenylyl sulfate(out) + adenosine 3',5'-bisphosphate(in). Probably functions as a 3'-phosphoadenylyl sulfate:adenosine 3',5'-bisphosphate antiporter at the Golgi membranes. Mediates the transport from the cytosol into the lumen of the Golgi of 3'-phosphoadenylyl sulfate/adenosine 3'-phospho 5'-phosphosulfate (PAPS), a universal sulfuryl donor for sulfation events that take place in that compartment. In Pongo abelii (Sumatran orangutan), this protein is Adenosine 3'-phospho 5'-phosphosulfate transporter 2.